Reading from the N-terminus, the 469-residue chain is 3-isopropylmalate dehydratase large subunit (469 aa).

The [4Fe-4S] cluster site is built by cysteine 350, cysteine 410, and cysteine 413.

It belongs to the aconitase/IPM isomerase family. LeuC type 1 subfamily. Heterodimer of LeuC and LeuD. [4Fe-4S] cluster serves as cofactor.

The enzyme catalyses (2R,3S)-3-isopropylmalate = (2S)-2-isopropylmalate. The protein operates within amino-acid biosynthesis; L-leucine biosynthesis; L-leucine from 3-methyl-2-oxobutanoate: step 2/4. In terms of biological role, catalyzes the isomerization between 2-isopropylmalate and 3-isopropylmalate, via the formation of 2-isopropylmaleate. This chain is 3-isopropylmalate dehydratase large subunit, found in Brucella anthropi (strain ATCC 49188 / DSM 6882 / CCUG 24695 / JCM 21032 / LMG 3331 / NBRC 15819 / NCTC 12168 / Alc 37) (Ochrobactrum anthropi).